Here is a 288-residue protein sequence, read N- to C-terminus: uncharacterized protein (288 aa).

Disordered stretches follow at residues 31 to 52 and 179 to 288; these read KAVD…EAPS and YPSK…VELK. Positions 206–217 are enriched in polar residues; that stretch reads RPSSPTNFSKLI. The segment covering 221–236 has biased composition (basic and acidic residues); that stretch reads YKDEWLQQQADSDKRA. 2 stretches are compositionally biased toward low complexity: residues 237 to 249 and 267 to 276; these read PQTP…SPSP and AAESSPLSSA.

This is an uncharacterized protein from Bos taurus (Bovine).